The primary structure comprises 371 residues: Probable trehalose-phosphate phosphatase 1 (371 aa).

This sequence belongs to the trehalose phosphatase family. A divalent metal cation serves as cofactor. In terms of tissue distribution, expressed in roots and shoots.

It catalyses the reaction alpha,alpha-trehalose 6-phosphate + H2O = alpha,alpha-trehalose + phosphate. It participates in glycan biosynthesis; trehalose biosynthesis. Its function is as follows. Removes the phosphate from trehalose 6-phosphate to produce free trehalose. Trehalose accumulation in plant improves abiotic stress tolerance. The chain is Probable trehalose-phosphate phosphatase 1 (TPP1) from Oryza sativa subsp. japonica (Rice).